We begin with the raw amino-acid sequence, 367 residues long: Peptide chain release factor 2 (367 aa).

The residue at position 254 (Gln-254) is an N5-methylglutamine.

This sequence belongs to the prokaryotic/mitochondrial release factor family. In terms of processing, methylated by PrmC. Methylation increases the termination efficiency of RF2.

The protein localises to the cytoplasm. Its function is as follows. Peptide chain release factor 2 directs the termination of translation in response to the peptide chain termination codons UGA and UAA. The sequence is that of Peptide chain release factor 2 from Bordetella bronchiseptica (strain ATCC BAA-588 / NCTC 13252 / RB50) (Alcaligenes bronchisepticus).